Consider the following 159-residue polypeptide: uncharacterized protein (159 aa).

The 145-residue stretch at 7-151 (LLINYKTLEE…NPLVWHPASE (145 aa)) folds into the N-acetyltransferase domain.

This is an uncharacterized protein from Bacillus licheniformis (strain ATCC 14580 / DSM 13 / JCM 2505 / CCUG 7422 / NBRC 12200 / NCIMB 9375 / NCTC 10341 / NRRL NRS-1264 / Gibson 46).